Here is a 159-residue protein sequence, read N- to C-terminus: Ribonuclease H (159 aa).

In terms of domain architecture, RNase H type-1 spans 8–150 (NLKEITMYTD…CDQLAVAAAK (143 aa)). Residues Asp17, Glu55, Asp77, and Asp142 each coordinate Mg(2+).

This sequence belongs to the RNase H family. In terms of assembly, monomer. Mg(2+) serves as cofactor.

The protein localises to the cytoplasm. It carries out the reaction Endonucleolytic cleavage to 5'-phosphomonoester.. Endonuclease that specifically degrades the RNA of RNA-DNA hybrids. This Desulforamulus reducens (strain ATCC BAA-1160 / DSM 100696 / MI-1) (Desulfotomaculum reducens) protein is Ribonuclease H.